We begin with the raw amino-acid sequence, 130 residues long: Large ribosomal subunit protein bL17 (130 aa).

It belongs to the bacterial ribosomal protein bL17 family. As to quaternary structure, part of the 50S ribosomal subunit. Contacts protein L32.

This is Large ribosomal subunit protein bL17 from Nitrosomonas europaea (strain ATCC 19718 / CIP 103999 / KCTC 2705 / NBRC 14298).